The chain runs to 386 residues: Succinate--CoA ligase [ADP-forming] subunit beta (386 aa).

One can recognise an ATP-grasp domain in the interval 9 to 244 (KEILHKFNVP…YDEEVKEEIE (236 aa)). ATP-binding positions include K46, 53–55 (GRG), E99, S102, and E107. Positions 199 and 213 each coordinate Mg(2+). Residues N264 and 321 to 323 (GIM) each bind substrate.

Belongs to the succinate/malate CoA ligase beta subunit family. Heterotetramer of two alpha and two beta subunits. Mg(2+) is required as a cofactor.

The enzyme catalyses succinate + ATP + CoA = succinyl-CoA + ADP + phosphate. It carries out the reaction GTP + succinate + CoA = succinyl-CoA + GDP + phosphate. It functions in the pathway carbohydrate metabolism; tricarboxylic acid cycle; succinate from succinyl-CoA (ligase route): step 1/1. Its function is as follows. Succinyl-CoA synthetase functions in the citric acid cycle (TCA), coupling the hydrolysis of succinyl-CoA to the synthesis of either ATP or GTP and thus represents the only step of substrate-level phosphorylation in the TCA. The beta subunit provides nucleotide specificity of the enzyme and binds the substrate succinate, while the binding sites for coenzyme A and phosphate are found in the alpha subunit. The polypeptide is Succinate--CoA ligase [ADP-forming] subunit beta (Wolbachia pipientis subsp. Culex pipiens (strain wPip)).